Here is a 124-residue protein sequence, read N- to C-terminus: Small ribosomal subunit protein uS13 (124 aa).

Residues 98–124 (VRGQRTRCNARTRKGPRKTVGAKRKEK) are disordered.

The protein belongs to the universal ribosomal protein uS13 family. As to quaternary structure, part of the 30S ribosomal subunit. Forms a loose heterodimer with protein S19. Forms two bridges to the 50S subunit in the 70S ribosome.

Its function is as follows. Located at the top of the head of the 30S subunit, it contacts several helices of the 16S rRNA. In the 70S ribosome it contacts the 23S rRNA (bridge B1a) and protein L5 of the 50S subunit (bridge B1b), connecting the 2 subunits; these bridges are implicated in subunit movement. Contacts the tRNAs in the A and P-sites. The chain is Small ribosomal subunit protein uS13 from Dictyoglomus turgidum (strain DSM 6724 / Z-1310).